A 134-amino-acid polypeptide reads, in one-letter code: Seminal plasma protein PDC-109 (134 aa).

A signal peptide spans 1 to 25; it reads MALQLGLFLIWAGVSVFLQLDPVNG. Threonine 36 carries O-linked (GalNAc...) threonine glycosylation. Fibronectin type-II domains follow at residues 44–88 and 89–134; these read PEDE…YCAQ and RDYA…WKYC. 4 disulfide bridges follow: cysteine 49-cysteine 73, cysteine 63-cysteine 86, cysteine 94-cysteine 119, and cysteine 108-cysteine 134.

This sequence belongs to the seminal plasma protein family. In terms of assembly, homodimer. O-linked glycan consists of Gal-GalNAc disaccharide which is modified with a sialic acid residue (macro- and/or microheterogeneity account for differences between BSP-A1 and BSP-A2). Major component of seminal plasma.

It localises to the secreted. Could enhance the fertilizing capacity of bull spermatozoa upon interaction with heparin-like glycosaminoglycans present in the female genital tract. Exhibits both simulatory and inhibitory actions on the release of pituitary gonadotropins. In Bos taurus (Bovine), this protein is Seminal plasma protein PDC-109.